A 390-amino-acid polypeptide reads, in one-letter code: Phosphopentomutase (390 aa).

Mn(2+)-binding residues include D11, D283, H288, D324, H325, and H336.

This sequence belongs to the phosphopentomutase family. The cofactor is Mn(2+).

It is found in the cytoplasm. It carries out the reaction 2-deoxy-alpha-D-ribose 1-phosphate = 2-deoxy-D-ribose 5-phosphate. It catalyses the reaction alpha-D-ribose 1-phosphate = D-ribose 5-phosphate. It participates in carbohydrate degradation; 2-deoxy-D-ribose 1-phosphate degradation; D-glyceraldehyde 3-phosphate and acetaldehyde from 2-deoxy-alpha-D-ribose 1-phosphate: step 1/2. Its function is as follows. Isomerase that catalyzes the conversion of deoxy-ribose 1-phosphate (dRib-1-P) and ribose 1-phosphate (Rib-1-P) to deoxy-ribose 5-phosphate (dRib-5-P) and ribose 5-phosphate (Rib-5-P), respectively. The protein is Phosphopentomutase of Alkaliphilus metalliredigens (strain QYMF).